Consider the following 238-residue polypeptide: Peptidyl-tRNA hydrolase (238 aa).

Tyr14 contacts tRNA. The active-site Proton acceptor is the His19. Residues Tyr64, Asn66, and Asn112 each coordinate tRNA. Residues 202 to 225 (PAAQSHIHQARNSAQPKKLPETGP) are disordered. The segment covering 207-216 (HIHQARNSAQ) has biased composition (polar residues).

It belongs to the PTH family. Monomer.

The protein localises to the cytoplasm. It catalyses the reaction an N-acyl-L-alpha-aminoacyl-tRNA + H2O = an N-acyl-L-amino acid + a tRNA + H(+). In terms of biological role, hydrolyzes ribosome-free peptidyl-tRNAs (with 1 or more amino acids incorporated), which drop off the ribosome during protein synthesis, or as a result of ribosome stalling. Catalyzes the release of premature peptidyl moieties from peptidyl-tRNA molecules trapped in stalled 50S ribosomal subunits, and thus maintains levels of free tRNAs and 50S ribosomes. This is Peptidyl-tRNA hydrolase from Agrobacterium fabrum (strain C58 / ATCC 33970) (Agrobacterium tumefaciens (strain C58)).